We begin with the raw amino-acid sequence, 254 residues long: 3-dehydroquinate dehydratase (254 aa).

3-dehydroquinate-binding positions include 47 to 49 (EFR) and R83. The active-site Proton donor/acceptor is the H144. K171 (schiff-base intermediate with substrate) is an active-site residue. 3-dehydroquinate-binding residues include R213, S232, and Q236.

The protein belongs to the type-I 3-dehydroquinase family. As to quaternary structure, homodimer.

It catalyses the reaction 3-dehydroquinate = 3-dehydroshikimate + H2O. It participates in metabolic intermediate biosynthesis; chorismate biosynthesis; chorismate from D-erythrose 4-phosphate and phosphoenolpyruvate: step 3/7. Involved in the third step of the chorismate pathway, which leads to the biosynthesis of aromatic amino acids. Catalyzes the cis-dehydration of 3-dehydroquinate (DHQ) and introduces the first double bond of the aromatic ring to yield 3-dehydroshikimate. In Neisseria meningitidis serogroup A / serotype 4A (strain DSM 15465 / Z2491), this protein is 3-dehydroquinate dehydratase.